The sequence spans 148 residues: uncharacterized protein (148 aa).

The signal sequence occupies residues 1–35 (MRCVTRTRNWWRRAARMPRAGSSAWWVAVCKQVCT).

The protein localises to the secreted. This is an uncharacterized protein from Homo sapiens (Human).